The chain runs to 1873 residues: Girdin (1873 aa).

The Calponin-homology (CH) domain occupies Gln12 to Ala132. Residues His196 to Glu425 are a coiled coil. Phosphoserine is present on residues Ser233, Ser237, and Ser449. Coiled coils occupy residues Thr458 to Asn1232 and His1268 to Asp1385. 2 disordered regions span residues Glu816–Leu841 and Glu1013–Ser1034. Ser1020 carries the phosphoserine modification. Ser1387 carries the phosphoserine modification. Positions Arg1390 to Lys1408 are phosphoinositide-binding. Residues Lys1407 to Lys1416 are compositionally biased toward basic and acidic residues. 3 disordered regions span residues Lys1407 to Lys1459, Thr1560 to Asn1602, and Gln1616 to Pro1643. Ser1417 is modified (phosphoserine; by PKB/AKT1). Polar residues-rich tracts occupy residues Ser1417–Gly1430, Val1445–Lys1459, Thr1560–Ser1579, and Gln1616–Asp1626. Thr1421 carries the post-translational modification Phosphothreonine. Positions Lys1674–Ser1704 match the GBA motif. Phosphoserine occurs at positions 1677, 1692, and 1719. Residues Ser1715–Asp1825 are SH2-like; required for interaction with growth factor receptors. The tract at residues Ser1738–Ser1873 is disordered. The span at Phe1745–Phe1755 shows a compositional bias: basic and acidic residues. Tyr1767 is modified (phosphotyrosine). 3 stretches are compositionally biased toward polar residues: residues Thr1768 to Gly1781, Thr1789 to Tyr1801, and Ser1809 to Arg1820. Tyr1801 is subject to Phosphotyrosine. 2 positions are modified to phosphoserine: Ser1822 and Ser1839. Basic and acidic residues predominate over residues Ser1822–Arg1832. Residues Ser1839–Ser1852 are compositionally biased toward low complexity. Residues Gln1858–Ser1873 show a composition bias toward basic and acidic residues.

The protein belongs to the CCDC88 family. Homodimer. Interacts (via GBA motif) with guanine nucleotide-binding protein G(i) alpha subunits GNAI1, GNAI2 and GNAI3. Also interacts (via GNA motif) with guanine nucleotide-binding protein G(s) alpha subunit GNAS. Interaction with G(i) alpha subunits occurs before interaction with GNAS and is regulated by phosphorylation; phosphorylation at Ser-1677 enhances binding to G(i) alpha subunits while phosphorylation at Ser-1692 abolishes G(i) alpha subunit binding, promoting binding to GNAS. Interacts (via C-terminal SH2-like region) with growth factor receptors EGFR, INSR and KDR/VEGFR2 (via their autophosphorylated cytoplasmic tails). Forms a complex with EGFR and GNAI3 which leads to enhanced EGFR signaling and triggering of cell migration; ligand stimulation is required for recruitment of GNAI3 to the complex. Interacts (tyrosine-phosphorylated form) with phosphatidylinositol 3-kinase (PI3K) regulatory subunit PIK3R1/p85a (via SH2 domains); the interaction enables recruitment of PIK3R1 to the EGFR receptor, enhancing PI3K activity and cell migration. Interacts with serine/threonine-protein kinase PRKCQ; the interaction leads to phosphorylation of CCDC88A and inhibition of its guanine nucleotide exchange factor activity. Interacts (via C-terminus) with DISC1; the interaction is direct. Interacts with AKT proteins; the interaction is inhibited in the presence of DISC1. Interacts with AKT1/PKB (via C-terminus). The non-phosphorylated form interacts with phosphatidylinositol 4-phosphate [Pi(4)P] and weakly with phosphatidylinositol 3-phosphate [Pi(3)P]. Interacts with microtubules. Interacts with actin. Phosphorylation is induced by epidermal growth factor (EGF) in a phosphoinositide 3-kinase (PI3K)-dependent manner. Phosphorylation by AKT1/PKB is necessary for the delocalization from the cell membrane and for cell migration. Phosphorylated on tyrosine residues which promotes binding to phosphatidylinositol 3-kinase (PI3K) regulatory subunit PIK3R1/p85a and enhances PI3K activity. Tyrosine-phosphorylated by both receptor and non-receptor tyrosine kinases in vitro. Tyrosine phosphorylation is required for AKT1-dependent phosphorylation of Ser-1417. Phosphorylation at Ser-1692 by PRKCQ disrupts interaction with GNAI3 and inhibits guanine nucleotide exchange factor activity. Expressed in the dentate gyrus, pyramidal cell layer of hippocampal regions CA1 and CA3 at postnatal 15. Expressed highly in neurons. Weakly in neuron progenitors (at protein level). Expressed in the dentate granule cell layer of the hippocampus. Expressed highly in the adult testis, moderately in the brain and at a low level in the spleen, lungs and fat.

Its subcellular location is the cell membrane. It is found in the cytoplasm. The protein resides in the cytosol. It localises to the cytoplasmic vesicle. The protein localises to the cell projection. Its subcellular location is the lamellipodium. It is found in the cytoskeleton. The protein resides in the cilium basal body. It localises to the microtubule organizing center. The protein localises to the centrosome. Its subcellular location is the centriole. Functionally, bifunctional modulator of guanine nucleotide-binding proteins (G proteins). Acts as a non-receptor guanine nucleotide exchange factor which binds to and activates guanine nucleotide-binding protein G(i) alpha subunits. Also acts as a guanine nucleotide dissociation inhibitor for guanine nucleotide-binding protein G(s) subunit alpha GNAS. Essential for cell migration. Interacts in complex with G(i) alpha subunits with the EGFR receptor, retaining EGFR at the cell membrane following ligand stimulation and promoting EGFR signaling which triggers cell migration. Binding to Gi-alpha subunits displaces the beta and gamma subunits from the heterotrimeric G-protein complex which enhances phosphoinositide 3-kinase (PI3K)-dependent phosphorylation and kinase activity of AKT1/PKB. Phosphorylation of AKT1/PKB induces the phosphorylation of downstream effectors GSK3 and FOXO1/FKHR, and regulates DNA replication and cell proliferation. Binds in its tyrosine-phosphorylated form to the phosphatidylinositol 3-kinase (PI3K) regulatory subunit PIK3R1 which enables recruitment of PIK3R1 to the EGFR receptor, enhancing PI3K activity and cell migration. Plays a role as a key modulator of the AKT-mTOR signaling pathway, controlling the tempo of the process of newborn neuron integration during adult neurogenesis, including correct neuron positioning, dendritic development and synapse formation. Inhibition of G(s) subunit alpha GNAS leads to reduced cellular levels of cAMP and suppression of cell proliferation. Essential for the integrity of the actin cytoskeleton. Required for formation of actin stress fibers and lamellipodia. May be involved in membrane sorting in the early endosome. Plays a role in ciliogenesis and cilium morphology and positioning and this may partly be through regulation of the localization of scaffolding protein CROCC/Rootletin. This is Girdin (Ccdc88a) from Mus musculus (Mouse).